A 115-amino-acid polypeptide reads, in one-letter code: DNA-binding protein STK_13740 (115 aa).

Belongs to the PDCD5 family.

The chain is DNA-binding protein STK_13740 from Sulfurisphaera tokodaii (strain DSM 16993 / JCM 10545 / NBRC 100140 / 7) (Sulfolobus tokodaii).